Reading from the N-terminus, the 642-residue chain is Wall-associated receptor kinase-like 6 (642 aa).

Residues 1–28 form the signal peptide; that stretch reads MKKTKTYQVFCIAALSVLTLQLINGSSA. The Extracellular segment spans residues 29–357; that stretch reads ATPPPPNSNS…PKITKPEKAS (329 aa). Asparagine 37, asparagine 72, asparagine 95, asparagine 137, asparagine 216, asparagine 240, and asparagine 276 each carry an N-linked (GlcNAc...) asparagine glycan. Residues 289-346 are atypical EGF-like; that stretch reads CSCEYDYFSGMSYRICYCNYGYTGNPYLRHGCIDIDECEGHHNCGEGTCVNMPGTHSC. Disulfide bonds link cysteine 291-cysteine 304, cysteine 326-cysteine 337, and cysteine 332-cysteine 346. A helical membrane pass occupies residues 358–378; the sequence is VLQGVLISLGVLLFVLGILGL. Residues 379–642 are Cytoplasmic-facing; the sequence is YKFIKKRTRI…KPLSRKRIGN (264 aa). In terms of domain architecture, Protein kinase spans 432-642; sequence FSMNRVLGQG…KPLSRKRIGN (211 aa). Residues 438-446 and lysine 460 each bind ATP; that span reads LGQGGQGTV. The residue at position 505 (tyrosine 505) is a Phosphotyrosine. Residue aspartate 559 is the Proton acceptor of the active site. A phosphothreonine mark is found at threonine 593 and threonine 598. The residue at position 606 (tyrosine 606) is a Phosphotyrosine.

The protein belongs to the protein kinase superfamily. Ser/Thr protein kinase family. Slightly expressed in the whole plant.

It localises to the membrane. It catalyses the reaction L-seryl-[protein] + ATP = O-phospho-L-seryl-[protein] + ADP + H(+). The catalysed reaction is L-threonyl-[protein] + ATP = O-phospho-L-threonyl-[protein] + ADP + H(+). Functionally, serine/threonine-protein kinase that may function as a signaling receptor of extracellular matrix component. The sequence is that of Wall-associated receptor kinase-like 6 (WAKL6) from Arabidopsis thaliana (Mouse-ear cress).